Consider the following 228-residue polypeptide: Ribonuclease HII (228 aa).

In terms of domain architecture, RNase H type-2 spans 26–214 (RAVAGVDEVG…VRAHSRFPLD (189 aa)). A divalent metal cation contacts are provided by Asp32, Glu33, and Asp124.

The protein belongs to the RNase HII family. Requires Mn(2+) as cofactor. The cofactor is Mg(2+).

Its subcellular location is the cytoplasm. It catalyses the reaction Endonucleolytic cleavage to 5'-phosphomonoester.. Functionally, endonuclease that specifically degrades the RNA of RNA-DNA hybrids. In Solibacter usitatus (strain Ellin6076), this protein is Ribonuclease HII.